The following is a 125-amino-acid chain: MINIALVATGGAIGSVFRYLVGVWSMRLAGPNFPWGTLAVNIVGSFLIGLLVELVARRLNASIEMRLFLVTGVLGGFTTFSSFSLDAVSLFERGALGLSAFYILASLVVSIAAVFAGLALGRNLF.

4 helical membrane passes run 4 to 24 (IALVATGGAIGSVFRYLVGVW), 35 to 55 (WGTLAVNIVGSFLIGLLVELV), 68 to 88 (FLVTGVLGGFTTFSSFSLDAV), and 100 to 120 (AFYILASLVVSIAAVFAGLAL). Residues Gly-75 and Thr-78 each coordinate Na(+).

Belongs to the fluoride channel Fluc/FEX (TC 1.A.43) family.

Its subcellular location is the cell inner membrane. The catalysed reaction is fluoride(in) = fluoride(out). Its activity is regulated as follows. Na(+) is not transported, but it plays an essential structural role and its presence is essential for fluoride channel function. Functionally, fluoride-specific ion channel. Important for reducing fluoride concentration in the cell, thus reducing its toxicity. This is Fluoride-specific ion channel FluC from Agrobacterium fabrum (strain C58 / ATCC 33970) (Agrobacterium tumefaciens (strain C58)).